The following is a 476-amino-acid chain: Efflux pump atB (476 aa).

The tract at residues 1-38 is disordered; sequence MAPQLAGSSHSSSASDQAHRQSSDPALESGSDTHVGSI. The next 10 helical transmembrane spans lie at 69–89, 96–116, 127–147, 186–206, 264–284, 294–314, 347–367, 372–392, 403–425, and 440–460; these read LIVA…LAPL, KPVY…CAVA, FFNG…VGDL, WSFY…SLLV, LLLC…FGAF, FNLW…IIGI, LPPA…FAWT, VHWI…IMIF, YPLY…AAAF, and WAGF…YIFY.

Belongs to the major facilitator superfamily.

It is found in the cell membrane. Efflux pump that might be required for efficient secretion of terreic acid. This is Efflux pump atB from Aspergillus terreus (strain NIH 2624 / FGSC A1156).